The primary structure comprises 208 residues: MKGLFVTIEGPEGSGKTTLIQSLLPYFEQKEQKVMATREPGGIAISEDIRTILHKQEYTMMEARTEALLYAAARRQHLVEKVMPALNDDYLVLCDRFIDSSLAYQGYARGLGMDKVFEINRFATEDCMPSLTIYLDIEPEVGLARIAKDAGREVNRLDMEDISFHKRVREGYLQVVERFSDRIVLVNADQPMEKLIEEVIQVIEDKLL.

An ATP-binding site is contributed by 10–17 (GPEGSGKT).

Belongs to the thymidylate kinase family.

It catalyses the reaction dTMP + ATP = dTDP + ADP. In terms of biological role, phosphorylation of dTMP to form dTDP in both de novo and salvage pathways of dTTP synthesis. The sequence is that of Thymidylate kinase from Bacillus cereus (strain 03BB102).